A 27-amino-acid chain; its full sequence is MIINHNMSAINAQRVQGBVTGVTKNMV.

The protein belongs to the bacterial flagellin family. In terms of assembly, the flagellum consists of an outer layer composed of repeating units of FlaA around a core that contains one or all of five antigenically related polypeptides.

It is found in the periplasmic flagellum. It localises to the periplasm. Its function is as follows. Component of the core of the flagella. The sequence is that of Flagellar filament 34 kDa core protein from Spirochaeta aurantia.